The chain runs to 241 residues: 1-(5-phosphoribosyl)-5-[(5-phosphoribosylamino)methylideneamino] imidazole-4-carboxamide isomerase (241 aa).

The active-site Proton acceptor is the Asp8. Residue Asp129 is the Proton donor of the active site.

This sequence belongs to the HisA/HisF family.

It localises to the cytoplasm. It catalyses the reaction 1-(5-phospho-beta-D-ribosyl)-5-[(5-phospho-beta-D-ribosylamino)methylideneamino]imidazole-4-carboxamide = 5-[(5-phospho-1-deoxy-D-ribulos-1-ylimino)methylamino]-1-(5-phospho-beta-D-ribosyl)imidazole-4-carboxamide. Its pathway is amino-acid biosynthesis; L-histidine biosynthesis; L-histidine from 5-phospho-alpha-D-ribose 1-diphosphate: step 4/9. In Caulobacter sp. (strain K31), this protein is 1-(5-phosphoribosyl)-5-[(5-phosphoribosylamino)methylideneamino] imidazole-4-carboxamide isomerase.